A 141-amino-acid polypeptide reads, in one-letter code: Galactose-6-phosphate isomerase subunit LacA (141 aa).

It belongs to the LacAB/RpiB family. In terms of assembly, heteromultimeric protein consisting of LacA and LacB.

It carries out the reaction aldehydo-D-galactose 6-phosphate = keto-D-tagatose 6-phosphate. Its pathway is carbohydrate metabolism; D-galactose 6-phosphate degradation; D-tagatose 6-phosphate from D-galactose 6-phosphate: step 1/1. The protein is Galactose-6-phosphate isomerase subunit LacA of Streptococcus equi subsp. zooepidemicus (strain MGCS10565).